Reading from the N-terminus, the 296-residue chain is Polyamine aminopropyltransferase (296 aa).

Positions 16–251 (HLWYFEYYTG…GMWSYTFASK (236 aa)) constitute a PABS domain. Gln-46 provides a ligand contact to S-methyl-5'-thioadenosine. Residues His-77 and Asp-101 each coordinate spermidine. S-methyl-5'-thioadenosine is bound by residues Glu-121 and 152 to 153 (NG). Residue Asp-170 is the Proton acceptor of the active site. 170–173 (DSTD) contacts spermidine.

It belongs to the spermidine/spermine synthase family. In terms of assembly, homotetramer.

It is found in the cytoplasm. The catalysed reaction is S-adenosyl 3-(methylsulfanyl)propylamine + putrescine = S-methyl-5'-thioadenosine + spermidine + H(+). Its pathway is amine and polyamine biosynthesis; spermidine biosynthesis; spermidine from putrescine: step 1/1. Its activity is regulated as follows. Strongly inhibited by S-adenosyl-1,8-diamino-3-thiooctane. In terms of biological role, catalyzes the irreversible transfer of a propylamine group from the amino donor S-adenosylmethioninamine (decarboxy-AdoMet) to putrescine (1,4-diaminobutane) to yield spermidine. It has lower affinity and lower activity towards 1,3-diaminopropane, cadaverine (1,5-diaminopentane), agmatine, norspermidine and spermidine (in vitro). This Thermotoga maritima (strain ATCC 43589 / DSM 3109 / JCM 10099 / NBRC 100826 / MSB8) protein is Polyamine aminopropyltransferase.